Here is a 245-residue protein sequence, read N- to C-terminus: Putative MSV199 domain-containing protein 146R (245 aa).

Positions 2–97 (RKGYIYVIEN…NTLHGKLKNL (96 aa)) constitute a GIY-YIG domain.

This Acheta domesticus (House cricket) protein is Putative MSV199 domain-containing protein 146R.